Here is a 638-residue protein sequence, read N- to C-terminus: Growth hormone receptor (638 aa).

Positions 1–18 (MDLWQLLLTLALAGSSDA) are cleaved as a signal peptide. The Extracellular portion of the chain corresponds to 19–264 (FSGSEATAAI…SQFTCEEDFY (246 aa)). Asn-46 carries an N-linked (GlcNAc...) asparagine glycan. Disulfide bonds link Cys-56-Cys-66 and Cys-101-Cys-112. An N-linked (GlcNAc...) asparagine glycan is attached at Asn-115. An intrachain disulfide couples Cys-126 to Cys-140. The 104-residue stretch at 151-254 (PPIALNWTLL…EVLYVTLPQM (104 aa)) folds into the Fibronectin type-III domain. 3 N-linked (GlcNAc...) asparagine glycosylation sites follow: Asn-156, Asn-161, and Asn-200. The short motif at 240–244 (YGEFS) is the WSXWS motif element. The interval 260 to 262 (EED) is required for ADAM17-mediated proteolysis. A helical membrane pass occupies residues 265-288 (FPWLLIIIFGIFGLTVMLFVFLFS). Topologically, residues 289-638 (KQQRIKMLIL…STDQLNKIMP (350 aa)) are cytoplasmic. The segment at 294 to 379 (KMLILPPVPV…HEKSHSNLGV (86 aa)) is required for JAK2 binding. Residues 297–305 (ILPPVPVPK) carry the Box 1 motif motif. Residues 340–349 (DSWVEFIELD) carry the UbE motif motif. Ser-341 carries the post-translational modification Phosphoserine. The interval 353–391 (PDEKTEESDTDRLLSSDHEKSHSNLGVKDGDSGRTSCCE) is disordered. Residues 362–384 (TDRLLSSDHEKSHSNLGVKDGDS) are compositionally biased toward basic and acidic residues. A phosphotyrosine; by JAK2 mark is found at Tyr-487 and Tyr-595.

Belongs to the type I cytokine receptor family. Type 1 subfamily. On growth hormone (GH) binding, forms homodimers and binds JAK2 via a box 1-containing domain. The soluble form (GHBP) is produced by phorbol ester-promoted proteolytic cleavage at the cell surface (shedding) by ADAM17/TACE. Shedding is inhibited by growth hormone (GH) binding to the receptor probably due to a conformational change in GHR rendering the receptor inaccessible to ADAM17. Post-translationally, on GH binding, phosphorylated on tyrosine residues in the cytoplasmic domain by JAK2. In terms of processing, ubiquitinated by the ECS(SOCS2) complex following ligand-binding and phosphorylation by JAK2, leading to its degradation by the proteasome. Regulation by the ECS(SOCS2) complex acts as a negative feedback loop of growth hormone receptor signaling. Ubiquitination is not sufficient for GHR internalization. Expressed in various tissues with high expression in liver and skeletal muscle. As to expression, isoform 2 is expressed in lung, stomach and muscle. In terms of tissue distribution, predominantly expressed in kidney, bladder, adrenal gland and brain stem. Highly expressed in placental villi.

It localises to the cell membrane. The protein resides in the secreted. Its function is as follows. Receptor for pituitary gland growth hormone (GH1) involved in regulating postnatal body growth. On ligand binding, couples to the JAK2/STAT5 pathway. The soluble form (GHBP) acts as a reservoir of growth hormone in plasma and may be a modulator/inhibitor of GH signaling. Functionally, up-regulates the production of the soluble Growth hormone-binding protein form (GHBP) and acts as a negative inhibitor of growth hormone signaling. This chain is Growth hormone receptor (GHR), found in Homo sapiens (Human).